A 338-amino-acid chain; its full sequence is Homoserine kinase (338 aa).

Belongs to the GHMP kinase family. Homoserine kinase subfamily.

The catalysed reaction is L-homoserine + ATP = O-phospho-L-homoserine + ADP + H(+). Its pathway is amino-acid biosynthesis; L-threonine biosynthesis; L-threonine from L-aspartate: step 4/5. Commits homoserine to the threonine biosynthesis pathway by catalyzing its O-phosphorylation. The sequence is that of Homoserine kinase from Schizosaccharomyces pombe (strain 972 / ATCC 24843) (Fission yeast).